A 79-amino-acid polypeptide reads, in one-letter code: Acyl carrier protein (79 aa).

In terms of domain architecture, Carrier spans 2 to 77 (SDIADKVKKI…DAIDYIEKQK (76 aa)). Ser37 is subject to O-(pantetheine 4'-phosphoryl)serine.

Belongs to the acyl carrier protein (ACP) family. In terms of processing, 4'-phosphopantetheine is transferred from CoA to a specific serine of apo-ACP by AcpS. This modification is essential for activity because fatty acids are bound in thioester linkage to the sulfhydryl of the prosthetic group.

The protein resides in the cytoplasm. The protein operates within lipid metabolism; fatty acid biosynthesis. Carrier of the growing fatty acid chain in fatty acid biosynthesis. The protein is Acyl carrier protein of Gluconobacter oxydans (strain 621H) (Gluconobacter suboxydans).